We begin with the raw amino-acid sequence, 158 residues long: SsrA-binding protein (158 aa).

The interval 135–158 (DKRKTLKDRDWERDKQRGFKKDLD) is disordered. The segment covering 141-158 (KDRDWERDKQRGFKKDLD) has biased composition (basic and acidic residues).

It belongs to the SmpB family.

The protein localises to the cytoplasm. In terms of biological role, required for rescue of stalled ribosomes mediated by trans-translation. Binds to transfer-messenger RNA (tmRNA), required for stable association of tmRNA with ribosomes. tmRNA and SmpB together mimic tRNA shape, replacing the anticodon stem-loop with SmpB. tmRNA is encoded by the ssrA gene; the 2 termini fold to resemble tRNA(Ala) and it encodes a 'tag peptide', a short internal open reading frame. During trans-translation Ala-aminoacylated tmRNA acts like a tRNA, entering the A-site of stalled ribosomes, displacing the stalled mRNA. The ribosome then switches to translate the ORF on the tmRNA; the nascent peptide is terminated with the 'tag peptide' encoded by the tmRNA and targeted for degradation. The ribosome is freed to recommence translation, which seems to be the essential function of trans-translation. The polypeptide is SsrA-binding protein (Psychrobacter arcticus (strain DSM 17307 / VKM B-2377 / 273-4)).